Consider the following 117-residue polypeptide: Hainantoxin-XV-4 (117 aa).

An N-terminal signal peptide occupies residues 1–20 (MKLCAVIIASLLVCVAVASS). The tract at residues 20–55 (SSDNQKEFAQEKEMTREETQSLGEHEKDDEVTGSEE) is disordered. Residues 21–56 (SDNQKEFAQEKEMTREETQSLGEHEKDDEVTGSEER) constitute a propeptide that is removed on maturation. Residues 23–55 (NQKEFAQEKEMTREETQSLGEHEKDDEVTGSEE) are compositionally biased toward basic and acidic residues. 4 disulfide bridges follow: Cys-58–Cys-72, Cys-65–Cys-78, Cys-69–Cys-115, and Cys-71–Cys-91.

Belongs to the neurotoxin 03 (Tx2) family. 02 subfamily. HNTX-XV sub-subfamily. As to expression, expressed by the venom gland.

It localises to the secreted. Functionally, putative ion channel inhibitor. This Cyriopagopus hainanus (Chinese bird spider) protein is Hainantoxin-XV-4.